Reading from the N-terminus, the 309-residue chain is Tyrosine recombinase XerD (309 aa).

Positions 3 to 88 constitute a Core-binding (CB) domain; that stretch reads MRASLAIENF…ALRQFFRFLY (86 aa). The Tyr recombinase domain maps to 109–302; sequence PLPKIMSVEN…LEERLHKLVS (194 aa). Residues Arg-158, Lys-182, His-254, Arg-257, and His-280 contribute to the active site. Tyr-289 acts as the O-(3'-phospho-DNA)-tyrosine intermediate in catalysis.

The protein belongs to the 'phage' integrase family. XerD subfamily. As to quaternary structure, forms a cyclic heterotetrameric complex composed of two molecules of XerC and two molecules of XerD.

Its subcellular location is the cytoplasm. Functionally, site-specific tyrosine recombinase, which acts by catalyzing the cutting and rejoining of the recombining DNA molecules. The XerC-XerD complex is essential to convert dimers of the bacterial chromosome into monomers to permit their segregation at cell division. It also contributes to the segregational stability of plasmids. This is Tyrosine recombinase XerD from Brucella suis biovar 1 (strain 1330).